The primary structure comprises 315 residues: D-alanine--D-alanine ligase B (315 aa).

The ATP-grasp domain occupies 109–309 (KKVAAAAGVV…FAELLSWMVE (201 aa)). 135-190 (PMKPPYVVKPVREGSSFGVVIVKEDQPHPPQVIGSADWKYGDEVMVEGYIAGRELT) is a binding site for ATP. 3 residues coordinate Mg(2+): Asp259, Glu276, and Asn278.

The protein belongs to the D-alanine--D-alanine ligase family. The cofactor is Mg(2+). Mn(2+) serves as cofactor.

It is found in the cytoplasm. It catalyses the reaction 2 D-alanine + ATP = D-alanyl-D-alanine + ADP + phosphate + H(+). It functions in the pathway cell wall biogenesis; peptidoglycan biosynthesis. Cell wall formation. The polypeptide is D-alanine--D-alanine ligase B (Brucella melitensis biotype 1 (strain ATCC 23456 / CCUG 17765 / NCTC 10094 / 16M)).